Here is a 150-residue protein sequence, read N- to C-terminus: Globin-2 A chain (150 aa).

At Val-2 the chain carries Blocked amino end (Val). The region spanning 10-150 (CGSEAIKANL…ALVGVVQAAL (141 aa)) is the Globin domain. A heme b-binding site is contributed by His-102.

This sequence belongs to the globin family. In terms of assembly, heterotetramer of two alpha chains and two beta chains.

This chain is Globin-2 A chain, found in Anadara inaequivalvis (Inequivalve ark).